The sequence spans 96 residues: Co-chaperonin GroES (96 aa).

This sequence belongs to the GroES chaperonin family. Heptamer of 7 subunits arranged in a ring. Interacts with the chaperonin GroEL.

It localises to the cytoplasm. Its function is as follows. Together with the chaperonin GroEL, plays an essential role in assisting protein folding. The GroEL-GroES system forms a nano-cage that allows encapsulation of the non-native substrate proteins and provides a physical environment optimized to promote and accelerate protein folding. GroES binds to the apical surface of the GroEL ring, thereby capping the opening of the GroEL channel. The protein is Co-chaperonin GroES of Shewanella pealeana (strain ATCC 700345 / ANG-SQ1).